Reading from the N-terminus, the 319-residue chain is Movement protein (319 aa).

Residues 1 to 20 form a disordered region; it reads MNSSVEKQNSEIPEKENEEF. The stretch at 289–319 forms a coiled coil; the sequence is KETSPSSSHQKSLEEISDKIDTLVVKLNNIS.

Belongs to the caulimoviridae movement protein family. In terms of assembly, homotrimer, through the coiled-coil domain. Interacts with VAP.

It localises to the host cell junction. The protein localises to the host plasmodesma. Functionally, transports viral genome to neighboring plant cells directly through plasmosdesmata, without any budding. The movement protein allows efficient cell to cell propagation, by bypassing the host cell wall barrier. Acts by forming tubules structures that increase the size exclusion limit (SEL) of plasmodesmata, thereby allowing viral ribonucleocapsids to spread directly to neighboring cells. This chain is Movement protein, found in Dianthus caryophyllus (Carnation).